Consider the following 350-residue polypeptide: Protein pelota homolog (350 aa).

Belongs to the eukaryotic release factor 1 family. Pelota subfamily. Monomer. It depends on a divalent metal cation as a cofactor.

It localises to the cytoplasm. Its function is as follows. May function in recognizing stalled ribosomes, interact with stem-loop structures in stalled mRNA molecules, and effect endonucleolytic cleavage of the mRNA. May play a role in the release non-functional ribosomes and degradation of damaged mRNAs. Has endoribonuclease activity. In Methanosarcina acetivorans (strain ATCC 35395 / DSM 2834 / JCM 12185 / C2A), this protein is Protein pelota homolog.